The sequence spans 173 residues: Alpha-crystallin A chain (173 aa).

An N-acetylmethionine modification is found at methionine 1. Residues 52–164 form the sHSP domain; it reads LFRSVLESGI…SDRPIPVARE (113 aa). Residues histidine 100, glutamate 102, histidine 107, and histidine 154 each coordinate Zn(2+). Residues 152 to 173 are disordered; that stretch reads TIHSDRPIPVAREEKPTSAPSS. Residues 153–167 show a composition bias toward basic and acidic residues; the sequence is IHSDRPIPVAREEKP.

This sequence belongs to the small heat shock protein (HSP20) family. Heteropolymer composed of three CRYAA and one CRYAB subunits. Inter-subunit bridging via zinc ions enhances stability, which is crucial as there is no protein turn over in the lens. Can also form homodimers and homotetramers (dimers of dimers) which serve as the building blocks of homooligomers. Within homooligomers, the zinc-binding motif is created from residues of 3 different molecules. His-100 and Glu-102 from one molecule are ligands of the zinc ion, and His-107 and His-154 residues from additional molecules complete the site with tetrahedral coordination geometry.

It localises to the cytoplasm. The protein localises to the nucleus. Functionally, contributes to the transparency and refractive index of the lens. May act as a chaperone, preventing aggregation of various proteins under a wide range of stress conditions. This chain is Alpha-crystallin A chain (CRYAA), found in Alligator mississippiensis (American alligator).